A 470-amino-acid chain; its full sequence is Neuraminidase (470 aa).

Topologically, residues 1 to 14 (MNPNQKIITIGSVS) are intravirion. Positions 11-32 (GSVSLGLVVLNILLHIVSITIT) are involved in apical transport and lipid raft association. The chain crosses the membrane as a helical span at residues 15–35 (LGLVVLNILLHIVSITITVLV). A hypervariable stalk region region spans residues 32–86 (TVLVLPGNGNNGSCNETVIREYNETVRIEKITQWHNTNVIEYIERPESDHFMNNT). Residues 36-470 (LPGNGNNGSC…AILPFDIDKM (435 aa)) lie on the Virion surface side of the membrane. Residues N42, N46, N54, and N84 are each glycosylated (N-linked (GlcNAc...) asparagine; by host). The head of neuraminidase stretch occupies residues 89-470 (LCDAKGFAPF…AILPFDIDKM (382 aa)). 8 disulfides stabilise this stretch: C90/C417, C122/C127, C182/C229, C231/C236, C277/C290, C279/C288, C316/C335, and C421/C446. R116 is a substrate binding site. Residue N144 is glycosylated (N-linked (GlcNAc...) asparagine; by host). The active-site Proton donor/acceptor is D149. Residue R150 coordinates substrate. 275–276 (EE) is a substrate binding site. R291 is a substrate binding site. Ca(2+) is bound at residue D292. N293 is a glycosylation site (N-linked (GlcNAc...) asparagine; by host). Ca(2+) contacts are provided by G296 and D322. R368 contributes to the substrate binding site. N-linked (GlcNAc...) asparagine; by host glycosylation is present at N398. The active-site Nucleophile is Y402.

It belongs to the glycosyl hydrolase 34 family. Homotetramer. The cofactor is Ca(2+). Post-translationally, N-glycosylated.

It is found in the virion membrane. It localises to the host apical cell membrane. It carries out the reaction Hydrolysis of alpha-(2-&gt;3)-, alpha-(2-&gt;6)-, alpha-(2-&gt;8)- glycosidic linkages of terminal sialic acid residues in oligosaccharides, glycoproteins, glycolipids, colominic acid and synthetic substrates.. Inhibited by the neuraminidase inhibitors zanamivir (Relenza) and oseltamivir (Tamiflu). These drugs interfere with the release of progeny virus from infected cells and are effective against all influenza strains. Resistance to neuraminidase inhibitors is quite rare. Functionally, catalyzes the removal of terminal sialic acid residues from viral and cellular glycoconjugates. Cleaves off the terminal sialic acids on the glycosylated HA during virus budding to facilitate virus release. Additionally helps virus spread through the circulation by further removing sialic acids from the cell surface. These cleavages prevent self-aggregation and ensure the efficient spread of the progeny virus from cell to cell. Otherwise, infection would be limited to one round of replication. Described as a receptor-destroying enzyme because it cleaves a terminal sialic acid from the cellular receptors. May facilitate viral invasion of the upper airways by cleaving the sialic acid moieties on the mucin of the airway epithelial cells. Likely to plays a role in the budding process through its association with lipid rafts during intracellular transport. May additionally display a raft-association independent effect on budding. Plays a role in the determination of host range restriction on replication and virulence. Sialidase activity in late endosome/lysosome traffic seems to enhance virus replication. This chain is Neuraminidase, found in Influenza A virus (strain A/Guinea fowl/New York/4-3587/1984 H3N8).